Here is a 274-residue protein sequence, read N- to C-terminus: 2,3,4,5-tetrahydropyridine-2,6-dicarboxylate N-succinyltransferase (274 aa).

It belongs to the transferase hexapeptide repeat family.

It is found in the cytoplasm. It carries out the reaction (S)-2,3,4,5-tetrahydrodipicolinate + succinyl-CoA + H2O = (S)-2-succinylamino-6-oxoheptanedioate + CoA. It participates in amino-acid biosynthesis; L-lysine biosynthesis via DAP pathway; LL-2,6-diaminopimelate from (S)-tetrahydrodipicolinate (succinylase route): step 1/3. This is 2,3,4,5-tetrahydropyridine-2,6-dicarboxylate N-succinyltransferase from Klebsiella pneumoniae (strain 342).